The sequence spans 302 residues: tRNA-cytidine(32) 2-sulfurtransferase (302 aa).

The PP-loop motif motif lies at 43–48; that stretch reads SGGKDS. 3 residues coordinate [4Fe-4S] cluster: C118, C121, and C209.

The protein belongs to the TtcA family. As to quaternary structure, homodimer. The cofactor is Mg(2+). It depends on [4Fe-4S] cluster as a cofactor.

The protein localises to the cytoplasm. It catalyses the reaction cytidine(32) in tRNA + S-sulfanyl-L-cysteinyl-[cysteine desulfurase] + AH2 + ATP = 2-thiocytidine(32) in tRNA + L-cysteinyl-[cysteine desulfurase] + A + AMP + diphosphate + H(+). It functions in the pathway tRNA modification. Catalyzes the ATP-dependent 2-thiolation of cytidine in position 32 of tRNA, to form 2-thiocytidine (s(2)C32). The sulfur atoms are provided by the cysteine/cysteine desulfurase (IscS) system. The polypeptide is tRNA-cytidine(32) 2-sulfurtransferase (Polynucleobacter asymbioticus (strain DSM 18221 / CIP 109841 / QLW-P1DMWA-1) (Polynucleobacter necessarius subsp. asymbioticus)).